We begin with the raw amino-acid sequence, 642 residues long: Chaperone protein DnaK (642 aa).

Threonine 200 is subject to Phosphothreonine; by autocatalysis. Positions 600–616 (EAAQQSAGAAGPMPGAP) are enriched in low complexity. A disordered region spans residues 600–642 (EAAQQSAGAAGPMPGAPAEEEPSDGPRKAKGRVVDAEIVDDDK). Over residues 623-634 (DGPRKAKGRVVD) the composition is skewed to basic and acidic residues.

Belongs to the heat shock protein 70 family.

In terms of biological role, acts as a chaperone. The sequence is that of Chaperone protein DnaK from Akkermansia muciniphila (strain ATCC BAA-835 / DSM 22959 / JCM 33894 / BCRC 81048 / CCUG 64013 / CIP 107961 / Muc).